The following is a 219-amino-acid chain: 7-methyl-GTP pyrophosphatase (219 aa).

D89 serves as the catalytic Proton acceptor.

This sequence belongs to the Maf family. YceF subfamily. The cofactor is a divalent metal cation.

The protein resides in the cytoplasm. It catalyses the reaction N(7)-methyl-GTP + H2O = N(7)-methyl-GMP + diphosphate + H(+). In terms of biological role, nucleoside triphosphate pyrophosphatase that hydrolyzes 7-methyl-GTP (m(7)GTP). May have a dual role in cell division arrest and in preventing the incorporation of modified nucleotides into cellular nucleic acids. This chain is 7-methyl-GTP pyrophosphatase, found in Polaromonas sp. (strain JS666 / ATCC BAA-500).